Consider the following 348-residue polypeptide: Flap endonuclease 1 (348 aa).

An N-domain region spans residues 1-98 (MGLAELRELI…ETLERRRERK (98 aa)). Mg(2+) contacts are provided by aspartate 28, aspartate 80, glutamate 149, glutamate 151, aspartate 170, aspartate 172, and aspartate 234. The I-domain stretch occupies residues 113-256 (EREKYARQVA…RALQLIRKYG (144 aa)). Residues 340 to 348 (RQETLDAFF) form an interaction with PCNA region.

Belongs to the XPG/RAD2 endonuclease family. FEN1 subfamily. In terms of assembly, interacts with PCNA. PCNA stimulates the nuclease activity without altering cleavage specificity. It depends on Mg(2+) as a cofactor.

In terms of biological role, structure-specific nuclease with 5'-flap endonuclease and 5'-3' exonuclease activities involved in DNA replication and repair. During DNA replication, cleaves the 5'-overhanging flap structure that is generated by displacement synthesis when DNA polymerase encounters the 5'-end of a downstream Okazaki fragment. Binds the unpaired 3'-DNA end and kinks the DNA to facilitate 5' cleavage specificity. Cleaves one nucleotide into the double-stranded DNA from the junction in flap DNA, leaving a nick for ligation. Also involved in the base excision repair (BER) pathway. Acts as a genome stabilization factor that prevents flaps from equilibrating into structures that lead to duplications and deletions. Also possesses 5'-3' exonuclease activity on nicked or gapped double-stranded DNA. This Methanopyrus kandleri (strain AV19 / DSM 6324 / JCM 9639 / NBRC 100938) protein is Flap endonuclease 1.